The chain runs to 149 residues: D-aminoacyl-tRNA deacylase (149 aa).

The Gly-cisPro motif, important for rejection of L-amino acids signature appears at 137-138 (GP).

It belongs to the DTD family. As to quaternary structure, homodimer.

The protein resides in the cytoplasm. It carries out the reaction glycyl-tRNA(Ala) + H2O = tRNA(Ala) + glycine + H(+). It catalyses the reaction a D-aminoacyl-tRNA + H2O = a tRNA + a D-alpha-amino acid + H(+). Its function is as follows. An aminoacyl-tRNA editing enzyme that deacylates mischarged D-aminoacyl-tRNAs. Also deacylates mischarged glycyl-tRNA(Ala), protecting cells against glycine mischarging by AlaRS. Acts via tRNA-based rather than protein-based catalysis; rejects L-amino acids rather than detecting D-amino acids in the active site. By recycling D-aminoacyl-tRNA to D-amino acids and free tRNA molecules, this enzyme counteracts the toxicity associated with the formation of D-aminoacyl-tRNA entities in vivo and helps enforce protein L-homochirality. The polypeptide is D-aminoacyl-tRNA deacylase (Clostridium perfringens (strain ATCC 13124 / DSM 756 / JCM 1290 / NCIMB 6125 / NCTC 8237 / Type A)).